We begin with the raw amino-acid sequence, 454 residues long: tRNA modification GTPase MnmE (454 aa).

Residues Arg-23, Glu-86, and Arg-125 each coordinate (6S)-5-formyl-5,6,7,8-tetrahydrofolate. In terms of domain architecture, TrmE-type G spans 221 to 376 (GLTLAIVGRP…LREQILRMVS (156 aa)). K(+) is bound at residue Asn-231. GTP contacts are provided by residues 231–236 (NVGKSS), 250–256 (TAIPGTT), and 275–278 (DTAG). Mg(2+) is bound at residue Ser-235. Residues Thr-250, Ile-252, and Thr-255 each coordinate K(+). Thr-256 contacts Mg(2+). (6S)-5-formyl-5,6,7,8-tetrahydrofolate is bound at residue Lys-454.

This sequence belongs to the TRAFAC class TrmE-Era-EngA-EngB-Septin-like GTPase superfamily. TrmE GTPase family. In terms of assembly, homodimer. Heterotetramer of two MnmE and two MnmG subunits. K(+) is required as a cofactor.

Its subcellular location is the cytoplasm. Its function is as follows. Exhibits a very high intrinsic GTPase hydrolysis rate. Involved in the addition of a carboxymethylaminomethyl (cmnm) group at the wobble position (U34) of certain tRNAs, forming tRNA-cmnm(5)s(2)U34. The protein is tRNA modification GTPase MnmE of Koribacter versatilis (strain Ellin345).